Here is a 578-residue protein sequence, read N- to C-terminus: Monooxygenase cfoE (578 aa).

The helical transmembrane segment at 549 to 569 (IVLSGVPLVVFGSLHLVLWIF) threads the bilayer.

This sequence belongs to the FMO family. FAD is required as a cofactor.

It localises to the membrane. The protein operates within secondary metabolite biosynthesis; flavonoid biosynthesis. In terms of biological role, monooxygenase; part of the gene cluster that mediates the biosynthesis of chlorflavonin, a fungal flavonoid with acetolactate synthase inhibitory activity. Within the pathway, cfoE is responsible for the chlorination of the flavonoid skeleton at position C3'. The pathway begins with the PKS-NRPS hybrid synthetase cfoA that uses benzoic acid or p-hydroxybenzoic acid as a starter unit with four rounds of chain elongation using malonyl-CoA to form the chalcone skeleton. Then, a new type of chalcone isomerase, cfoK, catalyzes the conversion of the chalcone into a flavanone by a histidine-mediated oxa-Michael addition mechanism. The desaturation of flavanone to flavone is catalyzed by a new type of flavone synthase, the flavin mononucleotide (FMN)-dependent oxidoreductase cfoJ. Monooxygenases cfoF, cfoG, and P450 cfoH are responsible for the hydroxylation of the flavonoid skeleton at sites C3, C8, and C2', respectively. Like cfoF, the dehydratase cfoI plays also a role in the hydroxylation of position C3. Methyltransferases cfoB, cfoC, and cfoD then catalyze the methylation of C7-OH, C8-OH, and C3-OH, respectively. Finally, the monooxygenase cfoE is responsible for the chlorination of flavonoid at position C3'. The protein is Monooxygenase cfoE of Aspergillus candidus.